Here is an 826-residue protein sequence, read N- to C-terminus: Leucine--tRNA ligase (826 aa).

Residues 42-52 (PYPSGNLHMGH) carry the 'HIGH' region motif. The 'KMSKS' region signature appears at 581-585 (KMSKS). K584 is an ATP binding site.

The protein belongs to the class-I aminoacyl-tRNA synthetase family.

Its subcellular location is the cytoplasm. It catalyses the reaction tRNA(Leu) + L-leucine + ATP = L-leucyl-tRNA(Leu) + AMP + diphosphate. This is Leucine--tRNA ligase from Desulforudis audaxviator (strain MP104C).